Consider the following 223-residue polypeptide: Octanoyltransferase (223 aa).

The BPL/LPL catalytic domain occupies 30 to 214; the sequence is DLDRDCFLLT…IVADLFGEFT (185 aa). Residues 75–82, 144–146, and 157–159 contribute to the substrate site; these read RGGEITYH, SIG, and GFA. C175 acts as the Acyl-thioester intermediate in catalysis.

The protein belongs to the LipB family.

The protein resides in the cytoplasm. It catalyses the reaction octanoyl-[ACP] + L-lysyl-[protein] = N(6)-octanoyl-L-lysyl-[protein] + holo-[ACP] + H(+). It functions in the pathway protein modification; protein lipoylation via endogenous pathway; protein N(6)-(lipoyl)lysine from octanoyl-[acyl-carrier-protein]: step 1/2. In terms of biological role, catalyzes the transfer of endogenously produced octanoic acid from octanoyl-acyl-carrier-protein onto the lipoyl domains of lipoate-dependent enzymes. Lipoyl-ACP can also act as a substrate although octanoyl-ACP is likely to be the physiological substrate. This is Octanoyltransferase from Desulfotalea psychrophila (strain LSv54 / DSM 12343).